The following is a 174-amino-acid chain: uncharacterized protein (174 aa).

Belongs to the NAD(P)H dehydrogenase (quinone) family.

This is an uncharacterized protein from Bacillus subtilis (strain 168).